Consider the following 403-residue polypeptide: GTPase Obg (403 aa).

In terms of domain architecture, Obg spans 1–159; sequence MKFIDESLIR…RDLLLELMLL (159 aa). Residues 160-333 enclose the OBG-type G domain; the sequence is ADVGMLGFPN…LCRDIMDFII (174 aa). GTP-binding positions include 166–173, 191–195, 213–216, 283–286, and 314–316; these read GFPNAGKS, FTTLV, DIPG, NKID, and SAA. The Mg(2+) site is built by Ser-173 and Thr-193. Residues 364-403 form a disordered region; that stretch reads YQFDDDEDWDDDWTEEDDDEDWDDDWSEEDDEGIEFIYKP. Residues 365–397 are compositionally biased toward acidic residues; it reads QFDDDEDWDDDWTEEDDDEDWDDDWSEEDDEGI.

The protein belongs to the TRAFAC class OBG-HflX-like GTPase superfamily. OBG GTPase family. In terms of assembly, monomer. Mg(2+) serves as cofactor.

It is found in the cytoplasm. In terms of biological role, an essential GTPase which binds GTP, GDP and possibly (p)ppGpp with moderate affinity, with high nucleotide exchange rates and a fairly low GTP hydrolysis rate. Plays a role in control of the cell cycle, stress response, ribosome biogenesis and in those bacteria that undergo differentiation, in morphogenesis control. The sequence is that of GTPase Obg from Haemophilus influenzae (strain PittGG).